The primary structure comprises 538 residues: Nicotinate phosphoribosyltransferase (538 aa).

2 residues coordinate nicotinate: Tyr21 and Thr210. The residue at position 213 (His213) is a Phosphohistidine. Arg318 is a binding site for nicotinate. Residue Thr380 participates in 5-phospho-alpha-D-ribose 1-diphosphate binding.

It belongs to the NAPRTase family. As to quaternary structure, homodimer. Mg(2+) is required as a cofactor. Mn(2+) serves as cofactor. Transiently phosphorylated on a His residue during the reaction cycle. Phosphorylation strongly increases the affinity for substrates and increases the rate of nicotinate D-ribonucleotide production. Dephosphorylation regenerates the low-affinity form of the enzyme, leading to product release.

Its subcellular location is the cytoplasm. It is found in the cytosol. The catalysed reaction is nicotinate + 5-phospho-alpha-D-ribose 1-diphosphate + ATP + H2O = nicotinate beta-D-ribonucleotide + ADP + phosphate + diphosphate. It functions in the pathway cofactor biosynthesis; NAD(+) biosynthesis; nicotinate D-ribonucleotide from nicotinate: step 1/1. Functionally, catalyzes the first step in the biosynthesis of NAD from nicotinic acid, the ATP-dependent synthesis of beta-nicotinate D-ribonucleotide from nicotinate and 5-phospho-D-ribose 1-phosphate. Helps prevent cellular oxidative stress via its role in NAD biosynthesis. This Rattus norvegicus (Rat) protein is Nicotinate phosphoribosyltransferase (Naprt).